Reading from the N-terminus, the 177-residue chain is Large ribosomal subunit protein uL6 (177 aa).

This sequence belongs to the universal ribosomal protein uL6 family. As to quaternary structure, part of the 50S ribosomal subunit.

In terms of biological role, this protein binds to the 23S rRNA, and is important in its secondary structure. It is located near the subunit interface in the base of the L7/L12 stalk, and near the tRNA binding site of the peptidyltransferase center. This is Large ribosomal subunit protein uL6 from Pseudomonas entomophila (strain L48).